A 572-amino-acid polypeptide reads, in one-letter code: Urease subunit alpha (572 aa).

His139, His141, and Lys222 together coordinate Ni(2+). Lys222 is subject to N6-carboxylysine. Residue His224 participates in substrate binding. 2 residues coordinate Ni(2+): His251 and His277. His325 serves as the catalytic Proton donor. Asp365 provides a ligand contact to Ni(2+).

Belongs to the metallo-dependent hydrolases superfamily. Urease alpha subunit family. In terms of assembly, heterotrimer of UreA (gamma), UreB (beta) and UreC (alpha) subunits. Three heterotrimers associate to form the active enzyme. Ni cation serves as cofactor. Post-translationally, carboxylation allows a single lysine to coordinate two nickel ions.

It localises to the cytoplasm. The catalysed reaction is urea + 2 H2O + H(+) = hydrogencarbonate + 2 NH4(+). It functions in the pathway nitrogen metabolism; urea degradation; CO(2) and NH(3) from urea (urease route): step 1/1. This Acetivibrio thermocellus (strain ATCC 27405 / DSM 1237 / JCM 9322 / NBRC 103400 / NCIMB 10682 / NRRL B-4536 / VPI 7372) (Clostridium thermocellum) protein is Urease subunit alpha.